The chain runs to 189 residues: UPF0301 protein PP_4995 (189 aa).

It belongs to the UPF0301 (AlgH) family.

In Pseudomonas putida (strain ATCC 47054 / DSM 6125 / CFBP 8728 / NCIMB 11950 / KT2440), this protein is UPF0301 protein PP_4995.